We begin with the raw amino-acid sequence, 245 residues long: Triosephosphate isomerase (245 aa).

Residue 4-6 (NWK) participates in substrate binding. His91 (electrophile) is an active-site residue. Glu161 functions as the Proton acceptor in the catalytic mechanism. Residues Gly167, Ser207, and 228-229 (GG) contribute to the substrate site.

Belongs to the triosephosphate isomerase family. In terms of assembly, homodimer.

The protein resides in the cytoplasm. The enzyme catalyses D-glyceraldehyde 3-phosphate = dihydroxyacetone phosphate. It participates in carbohydrate biosynthesis; gluconeogenesis. It functions in the pathway carbohydrate degradation; glycolysis; D-glyceraldehyde 3-phosphate from glycerone phosphate: step 1/1. Functionally, involved in the gluconeogenesis. Catalyzes stereospecifically the conversion of dihydroxyacetone phosphate (DHAP) to D-glyceraldehyde-3-phosphate (G3P). The polypeptide is Triosephosphate isomerase (Chlorobaculum tepidum (strain ATCC 49652 / DSM 12025 / NBRC 103806 / TLS) (Chlorobium tepidum)).